The following is a 229-amino-acid chain: Transcriptional regulatory protein CreB (229 aa).

Residues Thr5 to Leu119 form the Response regulatory domain. The residue at position 54 (Asp54) is a 4-aspartylphosphate. Positions Ser129–Gly228 form a DNA-binding region, ompR/PhoB-type.

Phosphorylated by CreC.

The protein resides in the cytoplasm. In terms of biological role, member of the two-component regulatory system CreC/CreB involved in catabolic regulation. The sequence is that of Transcriptional regulatory protein CreB (creB) from Escherichia coli (strain K12).